An 843-amino-acid chain; its full sequence is Tetratricopeptide repeat protein 7B (843 aa).

The TPR 1 repeat unit spans residues 97–131 (QESNLIMAKLNYVEGDYKEALNIYARVGLDDLPLT). A phosphoserine mark is found at Ser160 and Ser202. TPR repeat units follow at residues 219 to 252 (ETGLQRAHVLYFKNGNLTRGVGRFRELLRAVETR), 363 to 396 (SVVYDLLTIALGRRGQYEMLSECLERAMKFAFEE), 397 to 430 (FHLWYQFALSLMAAGKSARAVKVLKECIRLKPDD), 479 to 514 (TYSLQATDASLRGMQEVLQRKALLAFQRAHSLSPTD), 516 to 548 (QAAFYLALQLAISRQIPEALGYVRQALQLQGDD), and 549 to 582 (ANSLHLLALLLSAQKHYHDALNIIDMALSEYPEN). 7 positions are modified to phosphoserine: Ser625, Ser629, Ser630, Ser673, Ser677, Ser678, and Ser681. TPR repeat units follow at residues 696 to 729 (AQIWLHAAEVYIGIGKPAEATACTQEAANLFPMS), 730 to 763 (HNVLYMRGQIAELRGSMDEARRWYEEALAISPTH), 765 to 797 (KSMQRLALILHQLGRYSLAEKILRDAVQVNSTA), and 798 to 831 (HEVWNGLGEVLQAQGNDAAATECFLTALELEASS).

As to quaternary structure, component of a phosphatidylinositol 4-kinase (PI4K) complex, composed of PI4KA, EFR3 (EFR3A or EFR3B), TTC7 (TTC7A or TTC7B) and HYCC (HYCC1 or HYCC2). Interacts with PI4KA, interaction is direct. Interacts with EFR3 (EFR3A or EFR3B), interaction is direct. Interacts with HYCC (HYCC1 or HYCC2), interaction is direct. Association with the PI4K complex is strongly reduced by TMEM150A.

It localises to the cytoplasm. The protein localises to the cytosol. Its subcellular location is the cell membrane. Functionally, component of a complex required to localize phosphatidylinositol 4-kinase (PI4K) to the plasma membrane. The complex acts as a regulator of phosphatidylinositol 4-phosphate (PtdIns(4)P) synthesis. In the complex, plays a central role in bridging PI4KA to EFR3B and HYCC1, via direct interactions. This chain is Tetratricopeptide repeat protein 7B (TTC7B), found in Homo sapiens (Human).